Consider the following 416-residue polypeptide: Choline/ethanolaminephosphotransferase 1 (416 aa).

The interval 1 to 20 is disordered; it reads MSGHRSTRKRCGDSHPESPV. Residue Ser18 is modified to Phosphoserine. Residue Thr40 is modified to Phosphothreonine. A CDP-choline-binding site is contributed by Asn86. 2 consecutive transmembrane segments (helical) span residues 89 to 108 and 116 to 133; these read TIIGLSINICTTILLVFYCP and LWAYIACACGLFIYQSLD. Residue Asp133 participates in Mg(2+) binding. N-linked (GlcNAc...) asparagine glycosylation is present at Asn144. Glu151 is a CDP-choline binding site. Asp154 contributes to the Mg(2+) binding site. The Proton acceptor role is filled by His155. The next 8 membrane-spanning stretches (helical) occupy residues 156-176, 180-199, 210-230, 246-267, 286-306, 315-334, 349-363, and 368-388; these read GCDSLSTVFVVLGTCIAVQLG, DWMFFCCFAGTFMFYCAHWQ, IIDVTEVQIFIIIMHLLAVIG, MKIFPALCTVAGTIFSCTNYFR, VLSPFLHIGSVITLAAMIYKK, HPCLYILTFGFVSAKITNKL, TAFIGPALLFLDQYF, and DEYIVLWIALVFSFFDLIRYC. Residue Asp158 coordinates Mg(2+).

It belongs to the CDP-alcohol phosphatidyltransferase class-I family. In terms of assembly, homodimer. Requires Mg(2+) as cofactor. Mn(2+) is required as a cofactor. As to expression, ubiquitously expressed.

The protein resides in the endoplasmic reticulum membrane. It localises to the nucleus membrane. It carries out the reaction CDP-ethanolamine + a 1,2-diacyl-sn-glycerol = a 1,2-diacyl-sn-glycero-3-phosphoethanolamine + CMP + H(+). The enzyme catalyses CDP-choline + a 1,2-diacyl-sn-glycerol = a 1,2-diacyl-sn-glycero-3-phosphocholine + CMP + H(+). It catalyses the reaction 1-O-alkyl-2-acyl-sn-glycerol + CDP-choline = a 1-O-alkyl-2-acyl-sn-glycero-3-phosphocholine + CMP + H(+). The catalysed reaction is a 1-O-(1Z-alkenyl)-2-acyl-sn-glycerol + CDP-choline = a 1-O-(1Z-alkenyl)-2-acyl-sn-glycero-3-phosphocholine + CMP + H(+). It carries out the reaction 1,2-dioctanoyl-sn-glycerol + CDP-choline = 1,2-dioctanoyl-sn-glycero-3-phosphocholine + CMP + H(+). The enzyme catalyses 1,2-didecanoyl-sn-glycerol + CDP-choline = 1,2-didecanoyl-sn-glycero-3-phosphocholine + CMP + H(+). It catalyses the reaction CDP-choline + 1,2-di-(9Z-octadecenoyl)-sn-glycerol = 1,2-di-(9Z-octadecenoyl)-sn-glycero-3-phosphocholine + CMP + H(+). The catalysed reaction is 1-hexadecanoyl-2-(9Z-octadecenoyl)-sn-glycerol + CDP-choline = 1-hexadecanoyl-2-(9Z-octadecenoyl)-sn-glycero-3-phosphocholine + CMP + H(+). It carries out the reaction CDP-ethanolamine + 1,2-di-(9Z-octadecenoyl)-sn-glycerol = 1,2-di-(9Z-octadecenoyl)-sn-glycero-3-phosphoethanolamine + CMP + H(+). The enzyme catalyses 1-hexadecanoyl-2-(9Z-octadecenoyl)-sn-glycerol + CDP-ethanolamine = 1-hexadecanoyl-2-(9Z-octadecenoyl)-sn-glycero-3-phosphoethanolamine + CMP + H(+). It catalyses the reaction 1-hexadecanoyl-2-(4Z,7Z,10Z,13Z,16Z,19Z-docosahexaenoyl)-sn-glycerol + CDP-choline = 1-hexadecanoyl-2-(4Z,7Z,10Z,13Z,16Z,19Z-docosahexaenoyl)-sn-glycero-3-phosphocholine + CMP + H(+). The catalysed reaction is 1,2-di-(9Z-hexadecenoyl)-sn-glycerol + CDP-choline = 1,2-di-(9Z-hexadecenoyl)-sn-glycero-3-phosphocholine + CMP + H(+). It carries out the reaction 1,2-di-(9Z-hexadecenoyl)-sn-glycerol + CDP-ethanolamine = 1,2-di-(9Z-hexadecenoyl)-sn-glycero-3-phosphoethanolamine + CMP + H(+). The enzyme catalyses 1-O-hexadecyl-2-acetyl-sn-glycerol + CDP-choline = 1-O-hexadecyl-2-acetyl-sn-glycero-3-phosphocholine + CMP + H(+). It catalyses the reaction 1-O-hexadecyl-2-(5Z,8Z,11Z,14Z-eicosatetraenoyl)-sn-glycerol + CDP-choline = 1-O-hexadecyl-2-(5Z,8Z,11Z,14Z)-eicosatetraenoyl-sn-glycero-3-phosphocholine + CMP + H(+). The protein operates within phospholipid metabolism; phosphatidylethanolamine biosynthesis; phosphatidylethanolamine from ethanolamine: step 3/3. It functions in the pathway phospholipid metabolism; phosphatidylcholine biosynthesis; phosphatidylcholine from phosphocholine: step 2/2. Functionally, catalyzes both phosphatidylcholine and phosphatidylethanolamine biosynthesis from CDP-choline and CDP-ethanolamine, respectively. Involved in protein-dependent process of phospholipid transport to distribute phosphatidyl choline to the lumenal surface. Has a higher cholinephosphotransferase activity than ethanolaminephosphotransferase activity. The sequence is that of Choline/ethanolaminephosphotransferase 1 from Homo sapiens (Human).